The following is a 312-amino-acid chain: Homoserine O-acetyltransferase (312 aa).

The active-site Acyl-thioester intermediate is the Cys142. 2 residues coordinate substrate: Lys163 and Ser192. The active-site Proton acceptor is His235. Glu237 is a catalytic residue. Arg249 provides a ligand contact to substrate.

This sequence belongs to the MetA family.

It localises to the cytoplasm. It catalyses the reaction L-homoserine + acetyl-CoA = O-acetyl-L-homoserine + CoA. It functions in the pathway amino-acid biosynthesis; L-methionine biosynthesis via de novo pathway; O-acetyl-L-homoserine from L-homoserine: step 1/1. In terms of biological role, transfers an acetyl group from acetyl-CoA to L-homoserine, forming acetyl-L-homoserine. This chain is Homoserine O-acetyltransferase, found in Ruegeria sp. (strain TM1040) (Silicibacter sp.).